A 257-amino-acid polypeptide reads, in one-letter code: BTB/POZ domain-containing protein KCTD1 (257 aa).

The interval 1–25 (MSRPLITRSPASPLNNQGIPTPAQL) is disordered. 2 positions are modified to phosphoserine: S9 and S12. Positions 9–25 (SPASPLNNQGIPTPAQL) are enriched in polar residues. One can recognise a BTB domain in the interval 30-100 (APVHIDVGGH…LRTSKLLIPD (71 aa)).

Forms homopentamers. Interacts with KCTD15, probably forming heteropentamers depending on its abundance in a cell-type dependent manner. Interacts with TFAP2A, TFAP2B and TFAP2C via the BTB domain. Sumoylated.

It localises to the nucleus. Its function is as follows. May repress the transcriptional activity of AP-2 family members, including TFAP2A, TFAP2B and TFAP2C to various extent. This is BTB/POZ domain-containing protein KCTD1 (KCTD1) from Bos taurus (Bovine).